Reading from the N-terminus, the 31-residue chain is MSLIIGYIILLACAFGLAAGLYFGLSAIKLI.

The chain crosses the membrane as a helical span at residues 3–23 (LIIGYIILLACAFGLAAGLYF).

It belongs to the PetL family. As to quaternary structure, the 4 large subunits of the cytochrome b6-f complex are cytochrome b6, subunit IV (17 kDa polypeptide, PetD), cytochrome f and the Rieske protein, while the 4 small subunits are PetG, PetL, PetM and PetN. The complex functions as a dimer.

The protein localises to the plastid. It localises to the chloroplast thylakoid membrane. Functionally, component of the cytochrome b6-f complex, which mediates electron transfer between photosystem II (PSII) and photosystem I (PSI), cyclic electron flow around PSI, and state transitions. PetL is important for photoautotrophic growth as well as for electron transfer efficiency and stability of the cytochrome b6-f complex. The polypeptide is Cytochrome b6-f complex subunit 6 (Guillardia theta (Cryptophyte)).